Consider the following 403-residue polypeptide: Putative F-box/LRR-repeat protein At5g38386 (403 aa).

Residues 1 to 47 (MDHLSNLPDELLCHIMSFLTTKEAALISVLSKRWRNLIAFVPNLDIF) enclose the F-box domain. LRR repeat units lie at residues 64-91 (IRQLFMDFVDRVLALQGNSPLKKFSLCC), 93-119 (GGSYSDRVDCWIQNVMVRGVSELDLSM), 131-156 (VFENKKLNFEIFLRALPALEELVMNH), 175-203 (LKTLTIKCIVCLHTKSFDTPSLAYLSYSD), 243-274 (YLYFSRDTLEVLSLCCESMPVFKNLKSLSIKS), and 275-300 (VESRGWQAMPVLLRNCPHLETLVLEA).

The chain is Putative F-box/LRR-repeat protein At5g38386 from Arabidopsis thaliana (Mouse-ear cress).